Reading from the N-terminus, the 569-residue chain is Urease subunit alpha (569 aa).

Residues 131–569 (GAIDSHIHFI…LPLAQRYLLL (439 aa)) form the Urease domain. Residues histidine 136, histidine 138, and lysine 219 each coordinate Ni(2+). An N6-carboxylysine modification is found at lysine 219. Residue histidine 221 coordinates substrate. Histidine 248 and histidine 274 together coordinate Ni(2+). Catalysis depends on histidine 322, which acts as the Proton donor. Aspartate 362 provides a ligand contact to Ni(2+).

The protein belongs to the metallo-dependent hydrolases superfamily. Urease alpha subunit family. In terms of assembly, heterotrimer of UreA (gamma), UreB (beta) and UreC (alpha) subunits. Three heterotrimers associate to form the active enzyme. Ni cation serves as cofactor. Post-translationally, carboxylation allows a single lysine to coordinate two nickel ions.

Its subcellular location is the cytoplasm. The enzyme catalyses urea + 2 H2O + H(+) = hydrogencarbonate + 2 NH4(+). It functions in the pathway nitrogen metabolism; urea degradation; CO(2) and NH(3) from urea (urease route): step 1/1. The protein is Urease subunit alpha of Prochlorococcus marinus (strain NATL1A).